A 101-amino-acid polypeptide reads, in one-letter code: Integration host factor subunit alpha (101 aa).

It belongs to the bacterial histone-like protein family. In terms of assembly, heterodimer of an alpha and a beta chain.

In terms of biological role, this protein is one of the two subunits of integration host factor, a specific DNA-binding protein that functions in genetic recombination as well as in transcriptional and translational control. The polypeptide is Integration host factor subunit alpha (Halorhodospira halophila (strain DSM 244 / SL1) (Ectothiorhodospira halophila (strain DSM 244 / SL1))).